We begin with the raw amino-acid sequence, 309 residues long: Protein FdhE homolog (309 aa).

It belongs to the FdhE family.

The protein resides in the cytoplasm. Its function is as follows. Necessary for formate dehydrogenase activity. The protein is Protein FdhE homolog of Pectobacterium atrosepticum (strain SCRI 1043 / ATCC BAA-672) (Erwinia carotovora subsp. atroseptica).